Reading from the N-terminus, the 240-residue chain is MRPVVRKNFLNIEELKRFLNGQTVVSIQPVTGSPLDKTDFIVAMAIAVEQAGAKALRIEGVNNVAAVSAAVTIPIIGIVKRDLPDSPIRITPFVSDVDGLANAGATVIAFDATDRTRPESRERIAQAIKNTGCFAMADCSTFEDGLWANSQGVEIVGSTLSGYVGDIEPTVPDFQLVKAFSEAGFFTMAEGRYNTPELAAKAIESGAVAVTVGSALTRLEVVTQWFNNATQVAGERKCAH.

Belongs to the NanE family.

The enzyme catalyses an N-acyl-D-glucosamine 6-phosphate = an N-acyl-D-mannosamine 6-phosphate. The protein operates within amino-sugar metabolism; N-acetylneuraminate degradation; D-fructose 6-phosphate from N-acetylneuraminate: step 3/5. Converts N-acetylmannosamine-6-phosphate (ManNAc-6-P) to N-acetylglucosamine-6-phosphate (GlcNAc-6-P). The protein is Putative N-acetylmannosamine-6-phosphate 2-epimerase of Vibrio cholerae serotype O1 (strain ATCC 39541 / Classical Ogawa 395 / O395).